The sequence spans 140 residues: Large ribosomal subunit protein uL13 (140 aa).

The protein belongs to the universal ribosomal protein uL13 family. Part of the 50S ribosomal subunit.

Its function is as follows. This protein is one of the early assembly proteins of the 50S ribosomal subunit, although it is not seen to bind rRNA by itself. It is important during the early stages of 50S assembly. In Methanosarcina barkeri (strain Fusaro / DSM 804), this protein is Large ribosomal subunit protein uL13.